A 258-amino-acid polypeptide reads, in one-letter code: Protein SAWADEE HOMEODOMAIN HOMOLOG 1 (258 aa).

The segment at 138–244 (AWYDVSSFLT…LVRYELDNTE (107 aa)) is SAWADEE domain. The Zn(2+) site is built by C191, H225, C230, and C232.

As to quaternary structure, associates with the RNA polymerase IV (Pol IV) complex. Interacts with NRPD1, NRPD2, NRPD3, NRPD3B, CLSY1 and CLSY2.

It localises to the nucleus. Involved in RNA-directed DNA methylation (RdDM). Required for the silencing of some endogenous RdDM targets and accumulation of 24-nt siRNAs, but not for the production of Pol V-dependent transcripts. Functions in transcriptional silencing through both DNA methylation-dependent and -independent pathways. Required for both maintenance and de-novo DNA methylation. Plays a role in the recruitment of Pol IV to genomic regions associated with K9 methylated histone H3 that are targets for RdDM. The protein is Protein SAWADEE HOMEODOMAIN HOMOLOG 1 (SHH1) of Arabidopsis thaliana (Mouse-ear cress).